A 90-amino-acid polypeptide reads, in one-letter code: Probable Fe(2+)-trafficking protein (90 aa).

This sequence belongs to the Fe(2+)-trafficking protein family.

Functionally, could be a mediator in iron transactions between iron acquisition and iron-requiring processes, such as synthesis and/or repair of Fe-S clusters in biosynthetic enzymes. The polypeptide is Probable Fe(2+)-trafficking protein (Cupriavidus necator (strain ATCC 17699 / DSM 428 / KCTC 22496 / NCIMB 10442 / H16 / Stanier 337) (Ralstonia eutropha)).